The chain runs to 196 residues: Dephospho-CoA kinase (196 aa).

A DPCK domain is found at 6–196 (AIALTGGIGT…QVERFLKTLL (191 aa)). 14 to 19 (GTGKST) contacts ATP.

The protein belongs to the CoaE family.

The protein localises to the cytoplasm. The enzyme catalyses 3'-dephospho-CoA + ATP = ADP + CoA + H(+). The protein operates within cofactor biosynthesis; coenzyme A biosynthesis; CoA from (R)-pantothenate: step 5/5. In terms of biological role, catalyzes the phosphorylation of the 3'-hydroxyl group of dephosphocoenzyme A to form coenzyme A. The chain is Dephospho-CoA kinase from Helicobacter pylori (strain ATCC 700392 / 26695) (Campylobacter pylori).